Reading from the N-terminus, the 206-residue chain is Octanoyltransferase (206 aa).

Positions 30–206 constitute a BPL/LPL catalytic domain; sequence PETNDEIWLV…EFVTLLNNSI (177 aa). Residues 69-76, 137-139, and 150-152 each bind substrate; these read RGGQVTYH, SLG, and GIA. Cysteine 168 serves as the catalytic Acyl-thioester intermediate.

It belongs to the LipB family.

Its subcellular location is the cytoplasm. The enzyme catalyses octanoyl-[ACP] + L-lysyl-[protein] = N(6)-octanoyl-L-lysyl-[protein] + holo-[ACP] + H(+). Its pathway is protein modification; protein lipoylation via endogenous pathway; protein N(6)-(lipoyl)lysine from octanoyl-[acyl-carrier-protein]: step 1/2. Its function is as follows. Catalyzes the transfer of endogenously produced octanoic acid from octanoyl-acyl-carrier-protein onto the lipoyl domains of lipoate-dependent enzymes. Lipoyl-ACP can also act as a substrate although octanoyl-ACP is likely to be the physiological substrate. The polypeptide is Octanoyltransferase (Francisella tularensis subsp. novicida (strain U112)).